Reading from the N-terminus, the 221-residue chain is Spore wall protein 3 (221 aa).

A signal peptide spans 1-20 (MVRRSLYFLAVMGVVRSSSG). The tract at residues 150–203 (ENPASTGSSSTSTCPPKGTAGTTDNKGKAGGAAADDKSKSSSSSSSKKKKKGAK) is disordered. The segment covering 154 to 173 (STGSSSTSTCPPKGTAGTTD) has biased composition (low complexity). A lipid anchor (GPI-anchor amidated serine) is attached at S192. The propeptide at 193-221 (SSSKKKKKGAKSLVALGAVATTALFSIVM) is removed in mature form.

The protein localises to the spore wall. It is found in the membrane. The protein resides in the cytoplasm. Functionally, spore wall component. This is Spore wall protein 3 (SWP3) from Encephalitozoon cuniculi (strain GB-M1) (Microsporidian parasite).